Here is a 537-residue protein sequence, read N- to C-terminus: CTP synthase (537 aa).

The amidoligase domain stretch occupies residues 1–268 (MGETKYIFVT…DSTILEKMGL (268 aa)). Ser15 serves as a coordination point for CTP. Ser15 lines the UTP pocket. 16-21 (SLGKGI) is a binding site for ATP. Residue Tyr56 coordinates L-glutamine. Asp73 is an ATP binding site. Asp73 and Glu143 together coordinate Mg(2+). CTP contacts are provided by residues 150–152 (DIE), 189–194 (KTKPTQ), and Lys225. UTP-binding positions include 189-194 (KTKPTQ) and Lys225. Residues 296–537 (NIALVGKYDL…VKAAIENEKN (242 aa)) form the Glutamine amidotransferase type-1 domain. Gly357 is a binding site for L-glutamine. Cys384 (nucleophile; for glutamine hydrolysis) is an active-site residue. L-glutamine contacts are provided by residues 385-388 (LGMQ), Glu408, and Arg465. Residues His510 and Glu512 contribute to the active site.

Belongs to the CTP synthase family. In terms of assembly, homotetramer.

It catalyses the reaction UTP + L-glutamine + ATP + H2O = CTP + L-glutamate + ADP + phosphate + 2 H(+). The enzyme catalyses L-glutamine + H2O = L-glutamate + NH4(+). It carries out the reaction UTP + NH4(+) + ATP = CTP + ADP + phosphate + 2 H(+). It functions in the pathway pyrimidine metabolism; CTP biosynthesis via de novo pathway; CTP from UDP: step 2/2. Allosterically activated by GTP, when glutamine is the substrate; GTP has no effect on the reaction when ammonia is the substrate. The allosteric effector GTP functions by stabilizing the protein conformation that binds the tetrahedral intermediate(s) formed during glutamine hydrolysis. Inhibited by the product CTP, via allosteric rather than competitive inhibition. In terms of biological role, catalyzes the ATP-dependent amination of UTP to CTP with either L-glutamine or ammonia as the source of nitrogen. Regulates intracellular CTP levels through interactions with the four ribonucleotide triphosphates. The chain is CTP synthase from Bacteroides thetaiotaomicron (strain ATCC 29148 / DSM 2079 / JCM 5827 / CCUG 10774 / NCTC 10582 / VPI-5482 / E50).